We begin with the raw amino-acid sequence, 281 residues long: Mad-like protein 1 (281 aa).

Positions 71 to 80 (SCASNASTSS) are enriched in low complexity. The disordered stretch occupies residues 71-105 (SCASNASTSSQPYCSSPPARKSSKHSRTAHNELEK). A basic motif region spans residues 95–108 (HSRTAHNELEKTRR). Positions 95-147 (HSRTAHNELEKTRRANLRGCLETLKMLVPCVSDATRNTTLALLTRARDHIIEL) constitute a bHLH domain. Residues 109–147 (ANLRGCLETLKMLVPCVSDATRNTTLALLTRARDHIIEL) are helix-loop-helix motif. Positions 144–185 (IIELQDSNAAQMKKLNDLRDEQDELVAELAQLQADEEVAQAT) form a coiled coil. Residues 189-213 (CQTLSQSRPESRASSFTSTSSRDSP) are disordered. Over residues 200–212 (RASSFTSTSSRDS) the composition is skewed to low complexity.

Forms heterodimer with mxl-1 in the presence and absence of DNA. Post-translationally, ubiquitinated. In terms of tissue distribution, expressed in intestinal cells in adults. Expressed in D-type motor neuron cell bodies.

The protein resides in the nucleus. Transcriptional regulator which binds to the E box motif 5'-CACGTG-3', when in a heterodimeric complex with mxl-1. Involved in the control of lifespan in response to dietary restriction, the decline in protein homeostasis associated with normal aging, germline signaling and may overlap with the insulin-like signaling pathway. Plays a role in autophagy. Involved in promoting infection by the microsporidian pathogen N.parisii, possibly together with transcription factors pha-4 and zip-10. In response to neuronal injury, mdl-1 is targeted by sdz-33 for ubiquitin-mediated degradation, probably thereby reducing levels of mdl-1-mxl-1 heterodimers, allowing free mxl-1 to form complexes with tdpt-1 and thus inhibiting tdpt-1-dependent sumoylation of ets-4. This chain is Mad-like protein 1, found in Caenorhabditis elegans.